The primary structure comprises 239 residues: Ubiquinone biosynthesis O-methyltransferase (239 aa).

S-adenosyl-L-methionine contacts are provided by Arg-44, Gly-63, Asp-84, and Met-128.

This sequence belongs to the methyltransferase superfamily. UbiG/COQ3 family.

The catalysed reaction is a 3-demethylubiquinol + S-adenosyl-L-methionine = a ubiquinol + S-adenosyl-L-homocysteine + H(+). It carries out the reaction a 3-(all-trans-polyprenyl)benzene-1,2-diol + S-adenosyl-L-methionine = a 2-methoxy-6-(all-trans-polyprenyl)phenol + S-adenosyl-L-homocysteine + H(+). Its pathway is cofactor biosynthesis; ubiquinone biosynthesis. Its function is as follows. O-methyltransferase that catalyzes the 2 O-methylation steps in the ubiquinone biosynthetic pathway. The protein is Ubiquinone biosynthesis O-methyltransferase of Xanthomonas euvesicatoria pv. vesicatoria (strain 85-10) (Xanthomonas campestris pv. vesicatoria).